A 354-amino-acid polypeptide reads, in one-letter code: Probable L-ascorbate-6-phosphate lactonase UlaG (354 aa).

The protein belongs to the UlaG family. The cofactor is a divalent metal cation.

The protein resides in the cytoplasm. It catalyses the reaction L-ascorbate 6-phosphate + H2O = 3-dehydro-L-gulonate 6-phosphate. It functions in the pathway cofactor degradation; L-ascorbate degradation; D-xylulose 5-phosphate from L-ascorbate: step 1/4. Probably catalyzes the hydrolysis of L-ascorbate-6-P into 3-keto-L-gulonate-6-P. Is essential for L-ascorbate utilization under anaerobic conditions. The polypeptide is Probable L-ascorbate-6-phosphate lactonase UlaG (Escherichia coli O45:K1 (strain S88 / ExPEC)).